Consider the following 33-residue polypeptide: MRTYNPNSLLPSQMQKCTCVFLHPAFDLCGGEA.

The protein to E.coli ylcH.

This is an uncharacterized protein from Enterobacteria phage 82 (Bacteriophage 82).